Here is a 130-residue protein sequence, read N- to C-terminus: Small ribosomal subunit protein uS11c (130 aa).

This sequence belongs to the universal ribosomal protein uS11 family. As to quaternary structure, part of the 30S ribosomal subunit.

The protein localises to the plastid. Its subcellular location is the chloroplast. The sequence is that of Small ribosomal subunit protein uS11c from Tupiella akineta (Green alga).